Here is a 189-residue protein sequence, read N- to C-terminus: Peptidyl-tRNA hydrolase (189 aa).

TRNA is bound at residue H15. The active-site Proton acceptor is the H20. Residues F66, N68, and N114 each contribute to the tRNA site.

The protein belongs to the PTH family. As to quaternary structure, monomer.

Its subcellular location is the cytoplasm. The enzyme catalyses an N-acyl-L-alpha-aminoacyl-tRNA + H2O = an N-acyl-L-amino acid + a tRNA + H(+). Its function is as follows. Hydrolyzes ribosome-free peptidyl-tRNAs (with 1 or more amino acids incorporated), which drop off the ribosome during protein synthesis, or as a result of ribosome stalling. Functionally, catalyzes the release of premature peptidyl moieties from peptidyl-tRNA molecules trapped in stalled 50S ribosomal subunits, and thus maintains levels of free tRNAs and 50S ribosomes. The chain is Peptidyl-tRNA hydrolase from Streptococcus equi subsp. equi (strain 4047).